The sequence spans 187 residues: Elongation factor P (187 aa).

It belongs to the elongation factor P family.

It is found in the cytoplasm. It participates in protein biosynthesis; polypeptide chain elongation. Involved in peptide bond synthesis. Stimulates efficient translation and peptide-bond synthesis on native or reconstituted 70S ribosomes in vitro. Probably functions indirectly by altering the affinity of the ribosome for aminoacyl-tRNA, thus increasing their reactivity as acceptors for peptidyl transferase. In Mycobacteroides abscessus (strain ATCC 19977 / DSM 44196 / CCUG 20993 / CIP 104536 / JCM 13569 / NCTC 13031 / TMC 1543 / L948) (Mycobacterium abscessus), this protein is Elongation factor P.